The primary structure comprises 877 residues: Hopanoid transporter HpnN (877 aa).

Topologically, residues 1–16 (MVTSLIVRLVAWSVRR) are cytoplasmic. The chain crosses the membrane as a helical span at residues 17-37 (PVWVVVLSLLIAAFSGVYVAR). The Periplasmic portion of the chain corresponds to 38–279 (HFKINTDISK…FSSVEDGAAL (242 aa)). Residues 280–295 (NGVVTLLVVFVILWLA) form a helical membrane-spanning segment. Topologically, residues 296 to 299 (LRSK) are cytoplasmic. Residues 300 to 323 (RMIASVLVTLFVGLVVTAALGLAM) form a helical membrane-spanning segment. Residues 302-428 (IASVLVTLFV…LTLLPALLRL (127 aa)) enclose the SSD domain. Over 324 to 332 (VGSLNMISV) the chain is Periplasmic. A helical transmembrane segment spans residues 333-351 (AFMVLFVGLGVDFSIQYGV). The Cytoplasmic segment spans residues 352–373 (KYREERFRDERIDHALIGAAHS). The helical transmembrane segment at 374 to 394 (MGMPLALATTAVAASFFSFIP) threads the bilayer. The Periplasmic segment spans residues 395–399 (TAYRG). A helical transmembrane segment spans residues 400 to 426 (VSELGLIAGVGMFVALLTTLTLLPALL). The Cytoplasmic portion of the chain corresponds to 427-452 (RLFAPPGESKTPGFPWLAPVDDYLDR). The helical transmembrane segment at 453 to 472 (HRKPILIGTLAVVIGALPLL) threads the bilayer. Topologically, residues 473 to 718 (AFLHFDFNPL…ILHSANTIIS (246 aa)) are periplasmic. The helical transmembrane segment at 719-739 (AFLHAALWSIISITILLWITL) threads the bilayer. Residues 740–743 (RRFG) are Cytoplasmic-facing. Residues 744-766 (DVLRTLVPLLVSGIVTLEMCVVL) traverse the membrane as a helical segment. Topologically, residues 767 to 774 (GMSLNFAN) are periplasmic. A helical transmembrane segment spans residues 775 to 794 (IIALPLMLGVGVAFKVYFVM). Over 795–809 (AWRAGQTGLLHSSLT) the chain is Cytoplasmic. A helical membrane pass occupies residues 810-827 (HAVLFSAATTATAFGSLW). Topologically, residues 828-836 (LSHHPGTSS) are periplasmic. The chain crosses the membrane as a helical span at residues 837–858 (MGKLLALALTCTLIGAVVFQPV). Residues 859–877 (LMGKPRVKRAKNQSQGINE) are Cytoplasmic-facing.

It belongs to the resistance-nodulation-cell division (RND) (TC 2.A.6) family. MmpL subfamily. In terms of assembly, homodimer.

The protein resides in the cell inner membrane. Its function is as follows. Essential for hopanoid transport from the cytoplasmic to the outer membrane. Is capable of shuttling hopanoid lipids from the inner membrane to the periplasm, where they probably spontaneously insert to the inner leaflet of the outer membrane, strengthening the cell envelope. May be a proton-motive-force (PMF)-dependent transporter. Is critical for multidrug resistance and cell wall remodeling in Burkholderia. The protein is Hopanoid transporter HpnN of Burkholderia multivorans (strain ATCC 17616 / 249).